A 388-amino-acid chain; its full sequence is Galactokinase (388 aa).

Residue 33–36 (EHTD) coordinates substrate. ATP is bound by residues serine 67 and 125 to 131 (GSGLSSS). Mg(2+)-binding residues include serine 131 and glutamate 163. The active-site Proton acceptor is aspartate 175. Tyrosine 225 contacts substrate.

The protein belongs to the GHMP kinase family. GalK subfamily.

Its subcellular location is the cytoplasm. The enzyme catalyses alpha-D-galactose + ATP = alpha-D-galactose 1-phosphate + ADP + H(+). It functions in the pathway carbohydrate metabolism; galactose metabolism. Functionally, catalyzes the transfer of the gamma-phosphate of ATP to D-galactose to form alpha-D-galactose-1-phosphate (Gal-1-P). The sequence is that of Galactokinase from Lactobacillus helveticus (Lactobacillus suntoryeus).